Consider the following 258-residue polypeptide: Probable S-methyl-5'-thioinosine phosphorylase (258 aa).

Residue 53–54 (RH) coordinates phosphate. M180 lines the substrate pocket. T181 contributes to the phosphate binding site. Position 204–206 (204–206 (NQA)) interacts with substrate.

This sequence belongs to the PNP/MTAP phosphorylase family. MTAP subfamily. Homotrimer.

It carries out the reaction S-methyl-5'-thioinosine + phosphate = 5-(methylsulfanyl)-alpha-D-ribose 1-phosphate + hypoxanthine. It participates in purine metabolism; purine nucleoside salvage. Catalyzes the reversible phosphorylation of S-methyl-5'-thioinosine (MTI) to hypoxanthine and 5-methylthioribose-1-phosphate. Involved in the breakdown of S-methyl-5'-thioadenosine (MTA), a major by-product of polyamine biosynthesis. Catabolism of (MTA) occurs via deamination to MTI and phosphorolysis to hypoxanthine. This chain is Probable S-methyl-5'-thioinosine phosphorylase, found in Methanosarcina acetivorans (strain ATCC 35395 / DSM 2834 / JCM 12185 / C2A).